The primary structure comprises 960 residues: CWF19-like protein 2 (960 aa).

Disordered stretches follow at residues 1-222 (MAAY…AGVV), 261-552 (EFQK…ELIL), 624-648 (AWPV…AIET), and 712-731 (AQKE…AVQE). Residues 13 to 101 (SIKSRKESKR…KKAKKEKKDE (89 aa)) are a coiled coil. Residues 16 to 52 (SRKESKREERERVIQKAKEKFEKEERRKAERKARGED) show a composition bias toward basic and acidic residues. Residues 73-96 (KTKKAKKEKKAKKSKKEKKKKAKK) show a composition bias toward basic residues. The segment covering 108–117 (SSEDSEDEWV) has biased composition (acidic residues). The segment covering 135-146 (EATPSSSSASNN) has biased composition (low complexity). Residues 163 to 279 (SVADRRAQKE…EDAAYGERRD (117 aa)) adopt a coiled-coil conformation. Composition is skewed to basic and acidic residues over residues 165–181 (ADRR…ERQK), 261–372 (EFQK…DDLS), and 404–417 (KPVD…EAGF). Residues 507 to 518 (SAVQDSETPTLQ) show a composition bias toward polar residues. The stretch at 540–605 (SESEEEEEEE…IKDQSKRASK (66 aa)) forms a coiled coil. Over residues 541–552 (ESEEEEEEELIL) the composition is skewed to acidic residues. The span at 713–731 (QKERAGRDEERQRNKAVQE) shows a compositional bias: basic and acidic residues.

This sequence belongs to the CWF19 family.

The sequence is that of CWF19-like protein 2 (cwf19l2) from Danio rerio (Zebrafish).